Here is a 290-residue protein sequence, read N- to C-terminus: Ciliary microtubule inner protein 6 (290 aa).

The interval Glu76–Pro112 is disordered. 2 mn regions span residues Gly128 to Thr160 and Ser213 to Ala246. Residues Ser197–Ser228 form a disordered region.

It localises to the cell projection. The protein resides in the cilium. The sequence is that of Ciliary microtubule inner protein 6 (CIMIP6) from Bos taurus (Bovine).